A 420-amino-acid polypeptide reads, in one-letter code: Putative competence-damage inducible protein (420 aa).

The protein belongs to the CinA family.

This chain is Putative competence-damage inducible protein, found in Lactiplantibacillus plantarum (strain ATCC BAA-793 / NCIMB 8826 / WCFS1) (Lactobacillus plantarum).